Consider the following 251-residue polypeptide: Probable caffeoyl-CoA O-methyltransferase 3 (251 aa).

S-adenosyl-L-methionine is bound by residues threonine 61, aspartate 83, 85–86 (GV), serine 91, aspartate 109, and alanine 138. Residue aspartate 160 participates in a divalent metal cation binding. S-adenosyl-L-methionine is bound at residue aspartate 162. A divalent metal cation is bound by residues aspartate 186 and asparagine 187.

The protein belongs to the class I-like SAM-binding methyltransferase superfamily. Cation-dependent O-methyltransferase family. CCoAMT subfamily.

The enzyme catalyses (E)-caffeoyl-CoA + S-adenosyl-L-methionine = (E)-feruloyl-CoA + S-adenosyl-L-homocysteine + H(+). In Dictyostelium discoideum (Social amoeba), this protein is Probable caffeoyl-CoA O-methyltransferase 3 (omt1).